The chain runs to 238 residues: Valine-rich protein (238 aa).

The first 16 residues, 1–16, serve as a signal peptide directing secretion; sequence MQAVLLVVALFGAALA.

Prismatic layer of shell (at protein level). Expressed primarily in the mantle with highest level in the mantle edge and lower level in the mantle pallium.

It localises to the secreted. The sequence is that of Valine-rich protein from Margaritifera margaritifera (Freshwater pearl mussel).